Consider the following 190-residue polypeptide: Xanthine phosphoribosyltransferase (190 aa).

2 residues coordinate xanthine: Leu20 and Asn27. Residue 128–132 participates in 5-phospho-alpha-D-ribose 1-diphosphate binding; it reads ANGKA. Xanthine is bound at residue Lys156.

The protein belongs to the purine/pyrimidine phosphoribosyltransferase family. Xpt subfamily. Homodimer.

The protein resides in the cytoplasm. The enzyme catalyses XMP + diphosphate = xanthine + 5-phospho-alpha-D-ribose 1-diphosphate. It participates in purine metabolism; XMP biosynthesis via salvage pathway; XMP from xanthine: step 1/1. Its function is as follows. Converts the preformed base xanthine, a product of nucleic acid breakdown, to xanthosine 5'-monophosphate (XMP), so it can be reused for RNA or DNA synthesis. The polypeptide is Xanthine phosphoribosyltransferase (Pseudomonas entomophila (strain L48)).